The primary structure comprises 342 residues: Ferredoxin--NADP reductase (342 aa).

The FAD site is built by cysteine 17, aspartate 36, glutamine 44, tyrosine 49, isoleucine 89, phenylalanine 124, aspartate 289, and threonine 330.

Belongs to the ferredoxin--NADP reductase type 2 family. In terms of assembly, homodimer. Requires FAD as cofactor.

It catalyses the reaction 2 reduced [2Fe-2S]-[ferredoxin] + NADP(+) + H(+) = 2 oxidized [2Fe-2S]-[ferredoxin] + NADPH. This is Ferredoxin--NADP reductase from Rhodopseudomonas palustris (strain HaA2).